The chain runs to 207 residues: Melanocortin-2 receptor accessory protein 2 (207 aa).

Residues 1-21 (MEMSAQRLASNRTSPQSPSNS) form a disordered region. Positions 7-21 (RLASNRTSPQSPSNS) are enriched in polar residues. N-linked (GlcNAc...) asparagine glycosylation is present at Asn11. Residues 47–67 (IVIGFWVGLAVFVIFMFFVLT) traverse the membrane as a helical segment. At Ser91 the chain carries Phosphoserine.

It belongs to the MRAP family. Homodimer and heterodimer. Forms antiparallel homodimers and heterodimers with MRAP. Interacts with MC1R, MC2R, MC3R and MC5R. Interacts with MC4R. As to expression, predominantly expressed in the brain, mainly in the pons and cerebellum but also in regions involved in energy homeostasis, such as the hypothalamus and brainstem.

It localises to the cell membrane. Its subcellular location is the endoplasmic reticulum membrane. Functionally, modulator of melanocortin receptor 4 (MC4R), a receptor involved in energy homeostasis. Plays a central role in the control of energy homeostasis and body weight regulation by increasing ligand-sensitivity of MC4R and MC4R-mediated generation of cAMP. May also act as a negative regulator of MC2R: competes with MRAP for binding to MC2R and impairs the binding of corticotropin (ACTH) to MC2R. May also regulate activity of other melanocortin receptors (MC1R, MC3R and MC5R); however, additional evidence is required in vivo. The polypeptide is Melanocortin-2 receptor accessory protein 2 (Mrap2) (Mus musculus (Mouse)).